We begin with the raw amino-acid sequence, 128 residues long: Probable 4-amino-4-deoxy-L-arabinose-phosphoundecaprenol flippase subunit ArnF (128 aa).

Residues 1–5 lie on the Cytoplasmic side of the membrane; that stretch reads MKGYG. A helical membrane pass occupies residues 6–26; that stretch reads WGIGSVVLVTVAQLILKWGMM. Residues 27-47 are Periplasmic-facing; sequence NTPLMSLADINGQFVFNHLPQ. The helical transmembrane segment at 48–68 threads the bilayer; that stretch reads FIAVICGLAGYALSMLCWFFA. Residues 69–77 are Cytoplasmic-facing; sequence LRYLPLNRA. The helical transmembrane segment at 78 to 98 threads the bilayer; sequence YPLLSLSYALVYLGAVSLPWF. The Periplasmic segment spans residues 99 to 101; that stretch reads SES. Residues 102–122 form a helical membrane-spanning segment; sequence ATLLKTLGAGFILLGIWLINT. Topologically, residues 123-128 are cytoplasmic; it reads KPIAKD.

This sequence belongs to the ArnF family. Heterodimer of ArnE and ArnF.

It localises to the cell inner membrane. Its pathway is bacterial outer membrane biogenesis; lipopolysaccharide biosynthesis. Its function is as follows. Translocates 4-amino-4-deoxy-L-arabinose-phosphoundecaprenol (alpha-L-Ara4N-phosphoundecaprenol) from the cytoplasmic to the periplasmic side of the inner membrane. This is Probable 4-amino-4-deoxy-L-arabinose-phosphoundecaprenol flippase subunit ArnF from Yersinia enterocolitica serotype O:8 / biotype 1B (strain NCTC 13174 / 8081).